Reading from the N-terminus, the 356-residue chain is Homoserine O-acetyltransferase (356 aa).

The AB hydrolase-1 domain occupies 50 to 335 (NVILVCHALT…DEPYGHDAFL (286 aa)). Ser146 acts as the Nucleophile in catalysis. Arg215 contributes to the substrate binding site. Residues Asp302 and His331 contribute to the active site. Asp332 contacts substrate.

It belongs to the AB hydrolase superfamily. MetX family. As to quaternary structure, homodimer.

It localises to the cytoplasm. The catalysed reaction is L-homoserine + acetyl-CoA = O-acetyl-L-homoserine + CoA. It functions in the pathway amino-acid biosynthesis; L-methionine biosynthesis via de novo pathway; O-acetyl-L-homoserine from L-homoserine: step 1/1. Transfers an acetyl group from acetyl-CoA to L-homoserine, forming acetyl-L-homoserine. The protein is Homoserine O-acetyltransferase of Chlorobaculum tepidum (strain ATCC 49652 / DSM 12025 / NBRC 103806 / TLS) (Chlorobium tepidum).